A 624-amino-acid chain; its full sequence is DNA mismatch repair protein MutL (624 aa).

The protein belongs to the DNA mismatch repair MutL/HexB family.

This protein is involved in the repair of mismatches in DNA. It is required for dam-dependent methyl-directed DNA mismatch repair. May act as a 'molecular matchmaker', a protein that promotes the formation of a stable complex between two or more DNA-binding proteins in an ATP-dependent manner without itself being part of a final effector complex. This is DNA mismatch repair protein MutL from Chlorobium phaeobacteroides (strain DSM 266 / SMG 266 / 2430).